The primary structure comprises 622 residues: E3 ubiquitin-protein ligase hrd-1 (622 aa).

A signal peptide spans M1 to A23. Topologically, residues F24–N41 are lumenal. Residues A42–L62 form a helical membrane-spanning segment. Residues K63–D99 are Cytoplasmic-facing. The helical transmembrane segment at F100–L120 threads the bilayer. The Lumenal portion of the chain corresponds to A121–R141. The helical transmembrane segment at M142–F162 threads the bilayer. The Cytoplasmic portion of the chain corresponds to S163 to S170. The chain crosses the membrane as a helical span at residues S171 to I191. The Lumenal portion of the chain corresponds to K192–Y215. Residues A216 to L236 traverse the membrane as a helical segment. Over R237 to E622 the chain is Cytoplasmic. The RING-type; atypical zinc finger occupies C292–R333. Residues M436–N445 are compositionally biased toward pro residues. Disordered regions lie at residues M436 to D463 and P514 to E622. Positions A526–E538 are enriched in low complexity. Residues F562–P577 are compositionally biased toward polar residues. The segment covering P579–T596 has biased composition (low complexity).

The protein belongs to the HRD1 family. As to quaternary structure, homodimer.

The protein localises to the endoplasmic reticulum membrane. It catalyses the reaction S-ubiquitinyl-[E2 ubiquitin-conjugating enzyme]-L-cysteine + [acceptor protein]-L-lysine = [E2 ubiquitin-conjugating enzyme]-L-cysteine + N(6)-ubiquitinyl-[acceptor protein]-L-lysine.. It functions in the pathway protein modification; protein ubiquitination. Functionally, acts as an E3 ubiquitin-protein ligase which accepts ubiquitin specifically from endoplasmic reticulum-associated ubc-7 E2 ligase and transfers it to substrates, promoting their degradation. Component of the endoplasmic reticulum quality control (ERQC) system, which is also called the ER-associated degradation (ERAD) system, involved in ubiquitin-dependent degradation of misfolded endoplasmic reticulum proteins. Also promotes the degradation of normal but naturally short-lived proteins. Protects cells from ER stress-induced apoptosis. Thought to play a role together with hsp-3 in developmental growth and function of intestinal cells and to play a role together with hsp-4 in gonad formation. This Caenorhabditis briggsae protein is E3 ubiquitin-protein ligase hrd-1.